The sequence spans 121 residues: Small ribosomal subunit protein bS16 (121 aa).

Positions 97–114 (LAKAKTKDEENDNSKVES) are enriched in basic and acidic residues. Residues 97–121 (LAKAKTKDEENDNSKVESEGNEAES) are disordered.

The protein belongs to the bacterial ribosomal protein bS16 family.

The sequence is that of Small ribosomal subunit protein bS16 from Prochlorococcus marinus (strain AS9601).